Here is a 173-residue protein sequence, read N- to C-terminus: Ribosome maturation factor RimM (173 aa).

The PRC barrel domain maps to 94-166; it reads VQEEPYIDII…KIIVELPMGF (73 aa).

It belongs to the RimM family. As to quaternary structure, binds ribosomal protein uS19.

The protein resides in the cytoplasm. An accessory protein needed during the final step in the assembly of 30S ribosomal subunit, possibly for assembly of the head region. Essential for efficient processing of 16S rRNA. May be needed both before and after RbfA during the maturation of 16S rRNA. It has affinity for free ribosomal 30S subunits but not for 70S ribosomes. The chain is Ribosome maturation factor RimM from Amoebophilus asiaticus (strain 5a2).